Here is a 336-residue protein sequence, read N- to C-terminus: Phosphoribosylformylglycinamidine cyclo-ligase (336 aa).

The protein belongs to the AIR synthase family.

The protein resides in the cytoplasm. It carries out the reaction 2-formamido-N(1)-(5-O-phospho-beta-D-ribosyl)acetamidine + ATP = 5-amino-1-(5-phospho-beta-D-ribosyl)imidazole + ADP + phosphate + H(+). It functions in the pathway purine metabolism; IMP biosynthesis via de novo pathway; 5-amino-1-(5-phospho-D-ribosyl)imidazole from N(2)-formyl-N(1)-(5-phospho-D-ribosyl)glycinamide: step 2/2. In Thermoanaerobacter sp. (strain X514), this protein is Phosphoribosylformylglycinamidine cyclo-ligase.